Here is a 262-residue protein sequence, read N- to C-terminus: Phenylalanine-4-hydroxylase (262 aa).

Fe cation is bound by residues His-121, His-126, and Glu-166.

It belongs to the biopterin-dependent aromatic amino acid hydroxylase family. In terms of assembly, monomer. Fe(2+) serves as cofactor.

It catalyses the reaction (6R)-L-erythro-5,6,7,8-tetrahydrobiopterin + L-phenylalanine + O2 = (4aS,6R)-4a-hydroxy-L-erythro-5,6,7,8-tetrahydrobiopterin + L-tyrosine. It participates in amino-acid degradation; L-phenylalanine degradation; acetoacetate and fumarate from L-phenylalanine: step 1/6. This chain is Phenylalanine-4-hydroxylase (phhA), found in Pseudomonas aeruginosa (strain ATCC 15692 / DSM 22644 / CIP 104116 / JCM 14847 / LMG 12228 / 1C / PRS 101 / PAO1).